The sequence spans 328 residues: MKLWMESHLIVPETRPSPRMMSNQTLVTEFILQGFSEHPEYRVFLFSCFLFLYSGALTGNVLITLAITFNPGLHAPMYFFLLNLATMDIICTSSIMPKALASLVSEESSISYGGCMAQLYFLTWAASSELLLLTVMAYDRYAAICHPLHYSSMMSKVFCSGLATAVWLLCAVNTAIHTGLMLRLDFCGPNVIIHFFCEVPPLLLLSCSSTYVNGVMIVLADAFYGIVNFLMTIASYGFIVSSILKVKTAWGRQKAFSTCSSHLTVVCMYYTAVFYAYISPVSGYSAGKSKLAGLLYTVLSPTLNPLIYTLRNKEVKAALRKLFPFFRN.

Over 1-43 (MKLWMESHLIVPETRPSPRMMSNQTLVTEFILQGFSEHPEYRV) the chain is Extracellular. Asn-23 carries N-linked (GlcNAc...) asparagine glycosylation. A helical membrane pass occupies residues 44–64 (FLFSCFLFLYSGALTGNVLIT). Residues 65 to 72 (LAITFNPG) lie on the Cytoplasmic side of the membrane. A helical transmembrane segment spans residues 73–93 (LHAPMYFFLLNLATMDIICTS). The Extracellular segment spans residues 94-117 (SIMPKALASLVSEESSISYGGCMA). A disulfide bridge links Cys-115 with Cys-207. A helical transmembrane segment spans residues 118-138 (QLYFLTWAASSELLLLTVMAY). Residues 139 to 157 (DRYAAICHPLHYSSMMSKV) lie on the Cytoplasmic side of the membrane. Residues 158 to 178 (FCSGLATAVWLLCAVNTAIHT) form a helical membrane-spanning segment. At 179–215 (GLMLRLDFCGPNVIIHFFCEVPPLLLLSCSSTYVNGV) the chain is on the extracellular side. Residues 216 to 235 (MIVLADAFYGIVNFLMTIAS) traverse the membrane as a helical segment. Residues 236–255 (YGFIVSSILKVKTAWGRQKA) are Cytoplasmic-facing. A helical transmembrane segment spans residues 256 to 276 (FSTCSSHLTVVCMYYTAVFYA). Residues 277–289 (YISPVSGYSAGKS) are Extracellular-facing. The helical transmembrane segment at 290-310 (KLAGLLYTVLSPTLNPLIYTL) threads the bilayer. The Cytoplasmic portion of the chain corresponds to 311–328 (RNKEVKAALRKLFPFFRN).

It belongs to the G-protein coupled receptor 1 family.

The protein localises to the cell membrane. Functionally, odorant receptor. In Homo sapiens (Human), this protein is Olfactory receptor 13A1 (OR13A1).